The primary structure comprises 57 residues: Potassium channel toxin alpha-KTx 8.5 (57 aa).

The N-terminal stretch at M1 to A28 is a signal peptide. Cystine bridges form between C31-C47, C34-C52, and C38-C54.

It belongs to the short scorpion toxin superfamily. Potassium channel inhibitor family. Alpha-KTx 08 subfamily. In terms of tissue distribution, expressed by the venom gland.

The protein resides in the secreted. Selectively inhibits voltage-gated potassium channels Kv1.2/KCNA2 (IC(50)=183 nM). The polypeptide is Potassium channel toxin alpha-KTx 8.5 (Odontobuthus doriae (Yellow Iranian scorpion)).